The sequence spans 431 residues: Ribonuclease TTHA0252 (431 aa).

Zn(2+) is bound by residues His59, His61, Asp63, His64, His141, Asp162, and His400.

It belongs to the metallo-beta-lactamase superfamily. RNA-metabolizing metallo-beta-lactamase-like family. As to quaternary structure, monomer. Requires Zn(2+) as cofactor.

The protein resides in the cytoplasm. With respect to regulation, inhibited by cadmium, cobalt, manganese, magnesium, calcium and nickel ions. Its function is as follows. Has endoribonuclease activity towards 23S and 16S rRNA (in vitro). The chain is Ribonuclease TTHA0252 from Thermus thermophilus (strain ATCC 27634 / DSM 579 / HB8).